An 81-amino-acid chain; its full sequence is Small ribosomal subunit protein bS16 (81 aa).

This sequence belongs to the bacterial ribosomal protein bS16 family.

The polypeptide is Small ribosomal subunit protein bS16 (Colwellia psychrerythraea (strain 34H / ATCC BAA-681) (Vibrio psychroerythus)).